Here is a 91-residue protein sequence, read N- to C-terminus: C-C motif chemokine 5 (91 aa).

The N-terminal stretch at 1-23 (MKISAAALTIILTAAALCTPAPA) is a signal peptide. Cystine bridges form between Cys-33-Cys-57 and Cys-34-Cys-73.

Belongs to the intercrine beta (chemokine CC) family. As to expression, T-cell and macrophage specific.

The protein localises to the secreted. Chemoattractant for blood monocytes, memory T-helper cells and eosinophils. Causes the release of histamine from basophils and activates eosinophils. May activate several chemokine receptors including CCR1, CCR3, CCR4 and CCR5. May also be an agonist of the G protein-coupled receptor GPR75. Together with GPR75, may play a role in neuron survival through activation of a downstream signaling pathway involving the PI3, Akt and MAP kinases. By activating GPR75 may also play a role in insulin secretion by islet cells. The chain is C-C motif chemokine 5 (Ccl5) from Mus musculus (Mouse).